We begin with the raw amino-acid sequence, 247 residues long: Aliphatic sulfonates import ATP-binding protein SsuB 1 (247 aa).

Residues L7–T222 form the ABC transporter domain. G39–S46 is an ATP binding site.

Belongs to the ABC transporter superfamily. Aliphatic sulfonates importer (TC 3.A.1.17.2) family. As to quaternary structure, the complex is composed of two ATP-binding proteins (SsuB), two transmembrane proteins (SsuC) and a solute-binding protein (SsuA).

It is found in the cell membrane. The catalysed reaction is ATP + H2O + aliphatic sulfonate-[sulfonate-binding protein]Side 1 = ADP + phosphate + aliphatic sulfonateSide 2 + [sulfonate-binding protein]Side 1.. Part of the ABC transporter complex SsuABC involved in aliphatic sulfonates import. Responsible for energy coupling to the transport system. This chain is Aliphatic sulfonates import ATP-binding protein SsuB 1, found in Shouchella clausii (strain KSM-K16) (Alkalihalobacillus clausii).